The chain runs to 62 residues: MGCGNSTAGGAGGRGATGTTKDAAEESVSDDDKRRNYGGVYVGLPSDAAAMVSGQTKAAPKD.

Residues 1–16 are compositionally biased toward gly residues; sequence MGCGNSTAGGAGGRGA. Residues 1 to 62 are disordered; sequence MGCGNSTAGG…SGQTKAAPKD (62 aa).

This sequence belongs to the OCC1 family.

The polypeptide is Overexpressed in colon carcinoma 1 protein homolog (Gallus gallus (Chicken)).